The chain runs to 1373 residues: Disease resistance protein RRS1 (1373 aa).

Residues 5–146 (EKDEEFVCIS…EIVRDVYETH (142 aa)) enclose the TIR domain. Residues 170 to 421 (IGIRCVGIWG…LLEGCGFFPH (252 aa)) form the NB-ARC domain. 179 to 186 (GMPGIGKT) provides a ligand contact to ATP. 9 LRR repeats span residues 498-522 (SEEIEGLFLDTSNLRFDLQPSAFKN), 535-553 (NPEVHPVINFPTGSLHSLP), 554-575 (NELRLLHWENYPLKSLPQNFDP), 577-598 (HLVEINMPYSQLQKLWGGTKNL), 621-646 (AENLEVIDLQGCTRLQNFPAAGRLLR), 665-688 (PPNIEKLHLQGTGILALPVSTVKP), 742-766 (LPNMANLDLNVLDLSGCSSLNSIQG), 768-793 (PRFLKQLYLGGTAIREVPQLPQSLEI), and 831-854 (PRNLKELYFAGTTLREVPQLPLSL). The short motif at 988–1005 (RNFHCWAPGKVVPKVRKD) is the Nuclear localization signal element. Positions 1204–1272 (IPAIDEGDLW…YLSEHNHPRP (69 aa)) form a DNA-binding region, WRKY. The tract at residues 1300 to 1323 (RVFQNKDEPNKPHLPSSSTPPGNA) is disordered.

In terms of assembly, interacts with PopP2, a R.solanacearum type III effector.

Its subcellular location is the nucleus. Transcription factor. Interacts specifically with the W box (5'-(T)TGAC[CT]-3'), a frequently occurring elicitor-responsive cis-acting element. Also acts as a disease resistance protein involved in resistance to fungal and bacterial pathogens, including R.solanacearum, P.syringae pv. tomato and C.higginsianum. The sequence is that of Disease resistance protein RRS1 from Arabidopsis thaliana (Mouse-ear cress).